The sequence spans 660 residues: Bifunctional polymyxin resistance protein ArnA (660 aa).

The interval 1 to 304 is formyltransferase ArnAFT; it reads MKAIVFAYHD…EMGIVTDVRL (304 aa). His104 serves as the catalytic Proton donor; for formyltransferase activity. Residues Arg114 and 136–140 each bind (6R)-10-formyltetrahydrofolate; that span reads VKRPD. Residues 314–660 form a dehydrogenase ArnADH region; sequence RRTRVLILGV…RTTVQEGDGA (347 aa). NAD(+)-binding positions include Asp347 and 368–369; that span reads DI. Residues Ala393, Tyr398, and 432–433 contribute to the UDP-alpha-D-glucuronate site; that span reads TS. The Proton acceptor; for decarboxylase activity role is filled by Glu434. UDP-alpha-D-glucuronate is bound by residues Arg460, Asn492, 526–535, and Tyr613; that span reads KLMDGGAQKR. Residue Arg619 is the Proton donor; for decarboxylase activity of the active site.

The protein in the N-terminal section; belongs to the Fmt family. UDP-L-Ara4N formyltransferase subfamily. It in the C-terminal section; belongs to the NAD(P)-dependent epimerase/dehydratase family. UDP-glucuronic acid decarboxylase subfamily. Homohexamer, formed by a dimer of trimers.

It carries out the reaction UDP-alpha-D-glucuronate + NAD(+) = UDP-beta-L-threo-pentopyranos-4-ulose + CO2 + NADH. The catalysed reaction is UDP-4-amino-4-deoxy-beta-L-arabinose + (6R)-10-formyltetrahydrofolate = UDP-4-deoxy-4-formamido-beta-L-arabinose + (6S)-5,6,7,8-tetrahydrofolate + H(+). The protein operates within nucleotide-sugar biosynthesis; UDP-4-deoxy-4-formamido-beta-L-arabinose biosynthesis; UDP-4-deoxy-4-formamido-beta-L-arabinose from UDP-alpha-D-glucuronate: step 1/3. It participates in nucleotide-sugar biosynthesis; UDP-4-deoxy-4-formamido-beta-L-arabinose biosynthesis; UDP-4-deoxy-4-formamido-beta-L-arabinose from UDP-alpha-D-glucuronate: step 3/3. It functions in the pathway bacterial outer membrane biogenesis; lipopolysaccharide biosynthesis. Functionally, bifunctional enzyme that catalyzes the oxidative decarboxylation of UDP-glucuronic acid (UDP-GlcUA) to UDP-4-keto-arabinose (UDP-Ara4O) and the addition of a formyl group to UDP-4-amino-4-deoxy-L-arabinose (UDP-L-Ara4N) to form UDP-L-4-formamido-arabinose (UDP-L-Ara4FN). The modified arabinose is attached to lipid A and is required for resistance to polymyxin and cationic antimicrobial peptides. In Serratia proteamaculans (strain 568), this protein is Bifunctional polymyxin resistance protein ArnA.